We begin with the raw amino-acid sequence, 239 residues long: Phosphoribosylaminoimidazole-succinocarboxamide synthase (239 aa).

This sequence belongs to the SAICAR synthetase family.

It carries out the reaction 5-amino-1-(5-phospho-D-ribosyl)imidazole-4-carboxylate + L-aspartate + ATP = (2S)-2-[5-amino-1-(5-phospho-beta-D-ribosyl)imidazole-4-carboxamido]succinate + ADP + phosphate + 2 H(+). The protein operates within purine metabolism; IMP biosynthesis via de novo pathway; 5-amino-1-(5-phospho-D-ribosyl)imidazole-4-carboxamide from 5-amino-1-(5-phospho-D-ribosyl)imidazole-4-carboxylate: step 1/2. The sequence is that of Phosphoribosylaminoimidazole-succinocarboxamide synthase from Bacillus cytotoxicus (strain DSM 22905 / CIP 110041 / 391-98 / NVH 391-98).